We begin with the raw amino-acid sequence, 412 residues long: Argininosuccinate synthase (412 aa).

ATP contacts are provided by residues 10–18 and A36; that span reads AYSGGLDTS. The L-citrulline site is built by Y87 and S92. A Phosphotyrosine modification is found at Y87. K112 bears the N6-acetyllysine mark. Residue Y113 is modified to Phosphotyrosine. Residue 115 to 123 coordinates ATP; that stretch reads SHGATGKGN. T119, N123, and D124 together coordinate L-aspartate. N123 contributes to the L-citrulline binding site. An L-citrulline-binding site is contributed by R127. An N6-acetyllysine; by CLOCK mark is found at K165 and K176. Phosphoserine is present on residues S177 and S180. 2 residues coordinate L-citrulline: S180 and S189. Position 219 is a phosphothreonine (T219). Residues E270 and Y282 each coordinate L-citrulline.

This sequence belongs to the argininosuccinate synthase family. Type 1 subfamily. As to quaternary structure, homotetramer. Interacts with NMRAL1. Interacts with CLOCK; in a circadian manner. Forms tissue-specific complexes with ASL, SLC7A1, HSP90AA1 and nitric oxide synthase NOS1, NOS2 or NOS3; the complex regulates cell-autonomous L-arginine synthesis and citrulline recycling while channeling extracellular L-arginine to nitric oxide synthesis pathway. Post-translationally, acetylated by CLOCK in a circadian manner which negatively regulates its enzyme activity. Deacetylated by histone deacetylases.

The protein resides in the cytoplasm. It is found in the cytosol. It catalyses the reaction L-citrulline + L-aspartate + ATP = 2-(N(omega)-L-arginino)succinate + AMP + diphosphate + H(+). It functions in the pathway amino-acid biosynthesis; L-arginine biosynthesis; L-arginine from L-ornithine and carbamoyl phosphate: step 2/3. It participates in nitrogen metabolism; urea cycle; (N(omega)-L-arginino)succinate from L-aspartate and L-citrulline: step 1/1. Its function is as follows. One of the enzymes of the urea cycle, the metabolic pathway transforming neurotoxic amonia produced by protein catabolism into inocuous urea in the liver of ureotelic animals. Catalyzes the formation of arginosuccinate from aspartate, citrulline and ATP and together with ASL it is responsible for the biosynthesis of arginine in most body tissues. Indirectly, may be involved in the control of blood pressure. The sequence is that of Argininosuccinate synthase from Rattus norvegicus (Rat).